A 340-amino-acid polypeptide reads, in one-letter code: Glycerol-3-phosphate dehydrogenase [NAD(P)+] (340 aa).

NADPH contacts are provided by Ser11, Trp12, Arg32, Arg33, and Lys106. Sn-glycerol 3-phosphate-binding residues include Lys106, Gly138, and Ser140. Ala142 lines the NADPH pocket. Residues Lys193, Asp246, Ser256, Arg257, and Asn258 each coordinate sn-glycerol 3-phosphate. The active-site Proton acceptor is Lys193. Arg257 provides a ligand contact to NADPH. Residues Val281 and Glu283 each coordinate NADPH.

This sequence belongs to the NAD-dependent glycerol-3-phosphate dehydrogenase family.

Its subcellular location is the cytoplasm. The catalysed reaction is sn-glycerol 3-phosphate + NAD(+) = dihydroxyacetone phosphate + NADH + H(+). It catalyses the reaction sn-glycerol 3-phosphate + NADP(+) = dihydroxyacetone phosphate + NADPH + H(+). The protein operates within membrane lipid metabolism; glycerophospholipid metabolism. Catalyzes the reduction of the glycolytic intermediate dihydroxyacetone phosphate (DHAP) to sn-glycerol 3-phosphate (G3P), the key precursor for phospholipid synthesis. This is Glycerol-3-phosphate dehydrogenase [NAD(P)+] from Shouchella clausii (strain KSM-K16) (Alkalihalobacillus clausii).